Here is a 671-residue protein sequence, read N- to C-terminus: UvrABC system protein B (671 aa).

A Helicase ATP-binding domain is found at 26-414 (EGLENGLAHQ…GGDIIEQVVR (389 aa)). Residue 39–46 (GVTGSGKT) participates in ATP binding. Residues 92 to 115 (YYDYYQPEAYVPSSDTFIEKDASV) carry the Beta-hairpin motif. One can recognise a Helicase C-terminal domain in the interval 431–593 (QVDDLLSEIR…IIPQGLNKKI (163 aa)). The UVR domain occupies 631 to 666 (DQKIRELEAKMYTYAQNLEFEQAAELRDQVHQLRQQ).

This sequence belongs to the UvrB family. As to quaternary structure, forms a heterotetramer with UvrA during the search for lesions. Interacts with UvrC in an incision complex.

It is found in the cytoplasm. Functionally, the UvrABC repair system catalyzes the recognition and processing of DNA lesions. A damage recognition complex composed of 2 UvrA and 2 UvrB subunits scans DNA for abnormalities. Upon binding of the UvrA(2)B(2) complex to a putative damaged site, the DNA wraps around one UvrB monomer. DNA wrap is dependent on ATP binding by UvrB and probably causes local melting of the DNA helix, facilitating insertion of UvrB beta-hairpin between the DNA strands. Then UvrB probes one DNA strand for the presence of a lesion. If a lesion is found the UvrA subunits dissociate and the UvrB-DNA preincision complex is formed. This complex is subsequently bound by UvrC and the second UvrB is released. If no lesion is found, the DNA wraps around the other UvrB subunit that will check the other stand for damage. In Yersinia pestis, this protein is UvrABC system protein B.